The sequence spans 207 residues: Flavin-dependent thymidylate synthase (207 aa).

The ThyX domain maps to Met1–Lys204. Residues Ser50 and Arg74–Arg76 contribute to the FAD site. Residues Glu71–Arg74, Ser84–Arg86, and Lys143 contribute to the dUMP site. The ThyX motif motif lies at Arg74 to Ser84. Residues Asn159 to Arg161 and Asn165 contribute to the FAD site. Arg170 provides a ligand contact to dUMP. Residue Arg170 is the Involved in ionization of N3 of dUMP, leading to its activation of the active site.

Belongs to the thymidylate synthase ThyX family. As to quaternary structure, homotetramer. FAD serves as cofactor.

The enzyme catalyses dUMP + (6R)-5,10-methylene-5,6,7,8-tetrahydrofolate + NADPH + H(+) = dTMP + (6S)-5,6,7,8-tetrahydrofolate + NADP(+). It participates in pyrimidine metabolism; dTTP biosynthesis. Functionally, catalyzes the reductive methylation of 2'-deoxyuridine-5'-monophosphate (dUMP) to 2'-deoxythymidine-5'-monophosphate (dTMP) while utilizing 5,10-methylenetetrahydrofolate (mTHF) as the methyl donor, and NADPH and FADH(2) as the reductant. The chain is Flavin-dependent thymidylate synthase from Campylobacter jejuni subsp. jejuni serotype O:2 (strain ATCC 700819 / NCTC 11168).